Reading from the N-terminus, the 631-residue chain is Origin recognition complex subunit 1 (631 aa).

Low complexity-rich tracts occupy residues 1–14 (MTDE…YPPI) and 22–37 (KLNN…NNNH). The tract at residues 1–164 (MTDESSSSIS…EEEDEEGKFN (164 aa)) is disordered. A compositionally biased stretch (basic and acidic residues) spans 55–80 (DNEKIGFSDPENEKINKHKASFKDSN). Residues 91–104 (EDTDDDDYEDEDED) show a composition bias toward acidic residues. Basic and acidic residues predominate over residues 105 to 133 (ENHKIKDESDNSEDFNNHTKNTTDLDEGF). Acidic residues predominate over residues 141-160 (ESEEEEEEEEYEEEEEEDEE). Residues Val-230 and 265–273 (GMPGTGKTA) each bind ATP. Asp-361 and Glu-362 together coordinate Mg(2+). Glu-362, Asn-395, and Arg-460 together coordinate ATP.

Belongs to the ORC1 family. ORC is composed of six subunits.

It is found in the nucleus. In terms of biological role, component of the origin recognition complex (ORC) that binds origins of replication. DNA-binding is ATP-dependent, however specific DNA sequences that define origins of replication have not been identified so far. ORC is required to assemble the pre-replication complex necessary to initiate DNA replication. The polypeptide is Origin recognition complex subunit 1 (orcA) (Dictyostelium discoideum (Social amoeba)).